The following is a 400-amino-acid chain: 8-amino-7-oxononanoate synthase (400 aa).

Arginine 21 contributes to the substrate binding site. 112-113 (GY) lines the pyridoxal 5'-phosphate pocket. Histidine 137 contacts substrate. Pyridoxal 5'-phosphate-binding residues include serine 183, histidine 211, and threonine 239. An N6-(pyridoxal phosphate)lysine modification is found at lysine 242. Residue threonine 358 coordinates substrate.

It belongs to the class-II pyridoxal-phosphate-dependent aminotransferase family. BioF subfamily. In terms of assembly, homodimer. The cofactor is pyridoxal 5'-phosphate.

It carries out the reaction 6-carboxyhexanoyl-[ACP] + L-alanine + H(+) = (8S)-8-amino-7-oxononanoate + holo-[ACP] + CO2. Its pathway is cofactor biosynthesis; biotin biosynthesis. Functionally, catalyzes the decarboxylative condensation of pimeloyl-[acyl-carrier protein] and L-alanine to produce 8-amino-7-oxononanoate (AON), [acyl-carrier protein], and carbon dioxide. This Burkholderia lata (strain ATCC 17760 / DSM 23089 / LMG 22485 / NCIMB 9086 / R18194 / 383) protein is 8-amino-7-oxononanoate synthase.